The primary structure comprises 207 residues: Claudin-11 (207 aa).

Residue Met-1 is a topological domain, cytoplasmic. Residues 2–22 (VATCLQVVGFVTSFVGWIGII) traverse the membrane as a helical segment. Residues 23 to 82 (VTTSTNDWVVTCSYTIPTCRKMDELGSKGLWADCVMATGLYHCKPLVDILILPGYVQACR) are Extracellular-facing. A helical membrane pass occupies residues 83-103 (ALMIAASVLGLPAILLLLTVL). Over 104-122 (PCIRMGHEPGVAKYRRAQL) the chain is Cytoplasmic. A helical transmembrane segment spans residues 123 to 143 (AGVLLILLALCAIVATIWFPV). At 144-157 (CAHREITIVSFGYS) the chain is on the extracellular side. Residues 158 to 178 (LYAGWIGAVMCLVGGCVIVCC) form a helical membrane-spanning segment. At 179 to 207 (SGDAQSFGENRFYYSSGSSSPTHAKSAHV) the chain is on the cytoplasmic side. Ser-193, Ser-194, Ser-197, and Ser-198 each carry phosphoserine.

Belongs to the claudin family. In terms of assembly, interacts with tetraspanin-3/TSPAN3. Interacts with OCLN.

Its subcellular location is the cell junction. The protein resides in the tight junction. It is found in the cell membrane. In terms of biological role, plays a major role in tight junction-specific obliteration of the intercellular space, through calcium-independent cell-adhesion activity. The protein is Claudin-11 (Cldn11) of Mus musculus (Mouse).